The chain runs to 594 residues: Potassium-transporting ATPase potassium-binding subunit (594 aa).

The next 10 membrane-spanning stretches (helical) occupy residues 3 to 23, 67 to 87, 136 to 156, 179 to 199, 287 to 307, 314 to 334, 415 to 435, 453 to 473, 519 to 539, and 562 to 582; these read ADFL…APLL, AVAM…LQRL, ALTV…IALV, LYVL…QGVV, LEML…GEMV, VAIL…AAYF, GLYG…LMIG, VALV…VAVL, VLLG…ILAL, and LFVA…YVPA.

The protein belongs to the KdpA family. As to quaternary structure, the system is composed of three essential subunits: KdpA, KdpB and KdpC.

It is found in the cell inner membrane. Part of the high-affinity ATP-driven potassium transport (or Kdp) system, which catalyzes the hydrolysis of ATP coupled with the electrogenic transport of potassium into the cytoplasm. This subunit binds the periplasmic potassium ions and delivers the ions to the membrane domain of KdpB through an intramembrane tunnel. This Bordetella pertussis (strain Tohama I / ATCC BAA-589 / NCTC 13251) protein is Potassium-transporting ATPase potassium-binding subunit.